A 2671-amino-acid polypeptide reads, in one-letter code: Stalled ribosome sensor GCN1 (2671 aa).

Residue alanine 2 is modified to N-acetylalanine. 10 HEAT repeats span residues 140–178, 257–293, 294–331, 385–423, 425–459, 460–503, 560–597, 599–636, 697–732, and 733–770; these read NKLV…ENPG, EFKD…LDLS, QYAM…QCSD, IVAE…EVPK, LTEW…GDTL, LQAL…SVAD, NKVQ…SLGG, KLAH…AGKA, DPEA…SLSV, and LSPD…QTPA. Serine 729 carries the phosphoserine modification. Serine 786 carries the phosphoserine modification. Positions 804–863 form a coiled coil; that stretch reads QIIELELKEEIKKKKGIKEEVQLTSKQKEMLQAQLDREAQVRRRLQELDGELEAALGLLD. HEAT repeat units follow at residues 879–925, 979–1016, 1035–1072, 1078–1115, 1155–1192, 1210–1250, 1251–1289, 1290–1332, 1335–1372, 1374–1410, 1413–1451, 1455–1492, 1493–1530, 1534–1571, 1573–1609, 1611–1648, 1653–1690, 1692–1729, 1731–1769, 1773–1810, 1812–1848, 1921–1958, 1959–1996, 2001–2038, 2039–2076, 2078–2106, 2107–2146, 2147–2184, 2188–2225, 2259–2296, 2301–2338, 2339–2380, 2382–2417, 2422–2459, 2546–2583, and 2588–2625; these read VLVD…HVTL, SLVF…QAQL, LPRV…SSSG, FAEQ…VLPA, DLQP…RYQR, YRPP…YLDS, SQVK…THGK, ENVN…HLDK, PKVK…AIKE, AGGM…GLGI, LKQQ…MLGK, PYVV…NLSA, HGVK…CAPK, SCLP…VIRN, EILA…HFID, PSLA…LTDQ, PYLP…GMGE, CFED…GLGV, KLEK…TFGD, PYVG…MYAE, AIAL…HISG, EILP…KLGE, KILP…STSR, YFSE…TIGH, QALE…SRVV, PYLV…DALT, RHLG…VEDD, TGHR…RSKA, SHLR…KLDA, KGVT…LTSA, PSVV…AKVG, IALK…IHIK, DPLF…GAGA, VIRK…FLTE, QLPA…DPLP, and QAIK…MRQG. The interval 2260 to 2408 is RWDBD region; it reads GVTSILPVLR…GVRDTMLQAL (149 aa). Serine 2276 carries the phosphoserine modification. Residues 2627 to 2661 form an HEAT 47; degenerate repeat; that stretch reads EVFQSLSKILDVASLEVLNEVNRRSLKKLASQADS.

This sequence belongs to the GCN1 family. As to quaternary structure, interacts with EIF2AK4/GCN2; this interaction stimulates the EIF2AK4/GCN2 kinase activity and is impaired by IMPACT upon a variety of stress conditions, such as amino acid depletion, UV-C irradiation, proteasome inhibitor treatment and glucose deprivation. Interacts with IMPACT; this prevents the interaction of GCN1 with EIF2AK4/GCN2 and inhibits EIF2AK4/GCN2 kinase activity. Interacts with RNF14; interaction takes place following ribosome stalling and promotes recruitment of RNF14. As to expression, ubiquitously expressed. Expressed in skeletal muscules, ovary and testis.

Its subcellular location is the cytoplasm. Ribosome collision sensor that plays a key role in the RNF14-RNF25 translation quality control pathway, a pathway that takes place when a ribosome has stalled during translation, and which promotes ubiquitination and degradation of translation factors on stalled ribosomes. Directly binds to the ribosome and acts as a sentinel for colliding ribosomes: activated following ribosome stalling and promotes recruitment of RNF14, which directly ubiquitinates EEF1A1/eEF1A, leading to its degradation. In addition to EEF1A1/eEF1A, the RNF14-RNF25 translation quality control pathway mediates degradation of ETF1/eRF1 and ubiquitination of ribosomal protein. GCN1 also acts as a positive activator of the integrated stress response (ISR) by mediating activation of EIF2AK4/GCN2 in response to amino acid starvation. Interaction with EIF2AK4/GCN2 on translating ribosomes stimulates EIF2AK4/GCN2 kinase activity, leading to phosphorylation of eukaryotic translation initiation factor 2 (eIF-2-alpha/EIF2S1). EIF2S1/eIF-2-alpha phosphorylation converts EIF2S1/eIF-2-alpha into a global protein synthesis inhibitor, leading to a global attenuation of cap-dependent translation, and thus to a reduced overall utilization of amino acids, while concomitantly initiating the preferential translation of ISR-specific mRNAs, such as the transcriptional activator ATF4, and hence allowing ATF4-mediated reprogramming of amino acid biosynthetic gene expression to alleviate nutrient depletion. This chain is Stalled ribosome sensor GCN1, found in Homo sapiens (Human).